The chain runs to 574 residues: MRTLLTILTVGSLAAHAPEDPSDLLQHVKFQSSNFENILTWDSGPEGTPDTVYSIEYKTYGERDWVAKKGCQRITRKSCNLTVETGNLTELYYARVTAVSAGGRSATKMTDRFSSLQHTTLKPPDVTCISKVRSIQMIVHPTPTPIRAGDGHRLTLEDIFHDLFYHLELQVNRTYQMHLGGKQREYEFFGLTPDTEFLGTIMICVPTWAKESAPYMCRVKTLPDRTWTYSFSGAFLFSMGFLVAVLCYLSYRYVTKPPAPPNSLNVQRVLTFQPLRFIQEHVLIPVFDLSGPSSLAQPVQYSQIRVSGPREPAGAPQRHSLSEITYLGQPDISILQPSNVPPPQILSPLSYAPNAAPEVGPPSYAPQVTPEAQFPFYAPQAISKVQPSSYAPQATPDSWPPSYGVCMEGSGKDSPTGTLSSPKHLRPKGQLQKEPPAGSCMLGGLSLQEVTSLAMEESQEAKSLHQPLGICTDRTSDPNVLHSGEEGTPQYLKGQLPLLSSVQIEGHPMSLPLQPPSRPCSPSDQGPSPWGLLESLVCPKDEAKSPAPETSDLEQPTELDSLFRGLALTVQWES.

Residues 1–15 form the signal peptide; that stretch reads MRTLLTILTVGSLAA. The Extracellular portion of the chain corresponds to 16–228; that stretch reads HAPEDPSDLL…VKTLPDRTWT (213 aa). 2 Fibronectin type-III domains span residues 17–124 and 141–221; these read APED…LKPP and PTPT…RVKT. Residues Cys-71 and Cys-79 are joined by a disulfide bond. Residues Asn-80 and Asn-172 are each glycosylated (N-linked (GlcNAc...) asparagine). A disulfide bond links Cys-128 and Cys-217. The chain crosses the membrane as a helical span at residues 229–249; the sequence is YSFSGAFLFSMGFLVAVLCYL. At 250 to 574 the chain is on the cytoplasmic side; the sequence is SYRYVTKPPA…GLALTVQWES (325 aa). 3 disordered regions span residues 388 to 440, 454 to 489, and 507 to 560; these read SSYA…AGSC, AMEE…EGTP, and HPMS…TELD. 2 positions are modified to phosphoserine: Ser-410 and Ser-414.

The protein belongs to the type II cytokine receptor family. Heterodimer with IL10RB and with IL20RB. IL22 binding to heterodimer is greater than binding to IL22RA1 alone. Interacts with FBXW12; the interaction promotes ubiquitination of IL22RA1. Post-translationally, ubiquitinated. Expressed in colon, liver, lung, pancreas and kidney. No expression in immune cells such as monocytes, T-cells, and NK-cells. Expressed in keratinocytes of normal skin as well as in psoriatic skin lesion. Detected in normal blood brain barrier endothelial cells as well as in multiple sclerosis lesions; Strongly expressed on central nervous system vessels within infiltrated multiple sclerosis lesions. Overexpressed in synovial fluid cells from rheumatoid arthritis and spondyloarthropathy patients.

Its subcellular location is the cell membrane. Component of the receptor for IL20, IL22 and IL24. Component of IL22 receptor formed by IL22RA1 and IL10RB enabling IL22 signaling via JAK/STAT pathways. IL22 also induces activation of MAPK1/MAPK3 and Akt kinases pathways. Component of one of the receptor for IL20 and IL24 formed by IL22RA1 and IL20RB also signaling through STATs activation. Mediates IL24 antiangiogenic activity as well as IL24 inhibitory effect on endothelial cell tube formation and differentiation. This is Interleukin-22 receptor subunit alpha-1 (IL22RA1) from Homo sapiens (Human).